A 129-amino-acid polypeptide reads, in one-letter code: Small ribosomal subunit protein uS11 (129 aa).

Belongs to the universal ribosomal protein uS11 family. Part of the 30S ribosomal subunit. Interacts with proteins S7 and S18. Binds to IF-3.

Located on the platform of the 30S subunit, it bridges several disparate RNA helices of the 16S rRNA. Forms part of the Shine-Dalgarno cleft in the 70S ribosome. The sequence is that of Small ribosomal subunit protein uS11 from Synechococcus sp. (strain RCC307).